The chain runs to 332 residues: Endonuclease 8-like 2 (332 aa).

Proline 2 functions as the Schiff-base intermediate with DNA in the catalytic mechanism. The Proton donor role is filled by glutamate 3. Lysine 50 functions as the Proton donor; for beta-elimination activity in the catalytic mechanism. Lysine 50 bears the N6-acetyllysine mark. Residues 59-121 (DEEMGPPGSS…EDDSEYLERD (63 aa)) are disordered. Serine 68 carries the post-translational modification Phosphoserine. Over residues 74–84 (PQKEVQKEGAA) the composition is skewed to basic and acidic residues. Over residues 94–104 (GQKTLDGSSRS) the composition is skewed to polar residues. Lysine 154 bears the N6-acetyllysine mark. DNA is bound at residue asparagine 231. The segment at 284–320 (QVYQKEQCPAGHQVMKEAFGPEDGLQRLTWWCPQCQP) adopts an FPG-type zinc-finger fold. Residue arginine 310 is the Proton donor; for delta-elimination activity of the active site.

The protein belongs to the FPG family. In terms of assembly, binds EP300. Detected in testis, skeletal muscle, heart, brain, placenta, lung, pancreas, kidney and liver.

It is found in the nucleus. It carries out the reaction 2'-deoxyribonucleotide-(2'-deoxyribose 5'-phosphate)-2'-deoxyribonucleotide-DNA = a 3'-end 2'-deoxyribonucleotide-(2,3-dehydro-2,3-deoxyribose 5'-phosphate)-DNA + a 5'-end 5'-phospho-2'-deoxyribonucleoside-DNA + H(+). Its activity is regulated as follows. Acetylation of Lys-50 leads to loss of DNA nicking activity. Acetylation of Lys-154 has no effect. Its function is as follows. Involved in base excision repair of DNA damaged by oxidation or by mutagenic agents. Has DNA glycosylase activity towards 5-hydroxyuracil and other oxidized derivatives of cytosine with a preference for mismatched double-stranded DNA (DNA bubbles). Has low or no DNA glycosylase activity towards thymine glycol, 2-hydroxyadenine, hypoxanthine and 8-oxoguanine. Has AP (apurinic/apyrimidinic) lyase activity and introduces nicks in the DNA strand. Cleaves the DNA backbone by beta-delta elimination to generate a single-strand break at the site of the removed base with both 3'- and 5'-phosphates. In Homo sapiens (Human), this protein is Endonuclease 8-like 2 (NEIL2).